A 407-amino-acid chain; its full sequence is Succinate--CoA ligase [ADP-forming] subunit beta, hydrogenosomal (407 aa).

Residues 1 to 9 (MLSSSFARN) constitute a hydrogenosome transit peptide. One can recognise an ATP-grasp domain in the interval 18-261 (KEICAKYNVA…LKQVNPFEIR (244 aa)). ATP contacts are provided by residues Lys55, 62-64 (GRG), and Glu124. Positions 216 and 230 each coordinate Mg(2+). Residues Asn281 and 338 to 340 (GIV) each bind substrate.

This sequence belongs to the succinate/malate CoA ligase beta subunit family. Heterodimer of an alpha and a beta subunit. Requires Mg(2+) as cofactor.

Its subcellular location is the hydrogenosome. The enzyme catalyses succinate + ATP + CoA = succinyl-CoA + ADP + phosphate. It functions in the pathway carbohydrate metabolism; tricarboxylic acid cycle; succinate from succinyl-CoA (ligase route): step 1/1. Succinyl-CoA synthetase functions in the citric acid cycle (TCA), coupling the hydrolysis of succinyl-CoA to the synthesis of ATP and thus represents the only step of substrate-level phosphorylation in the TCA. The beta subunit provides nucleotide specificity of the enzyme and binds the substrate succinate, while the binding sites for coenzyme A and phosphate are found in the alpha subunit. The protein is Succinate--CoA ligase [ADP-forming] subunit beta, hydrogenosomal of Trichomonas vaginalis.